Consider the following 726-residue polypeptide: Biotin--protein ligase (726 aa).

The interval 28 to 98 is disordered; it reads EVKDQVSNKQ…SDRGGGPVEH (71 aa). Positions 43 to 75 are enriched in basic and acidic residues; the sequence is PKPEPSLEIKPEQDGMEHVGRDDPKALGEEPKQ. Phosphoserine is present on residues S147 and S299. Positions 463–652 constitute a BPL/LPL catalytic domain; that stretch reads KQLGKVILFA…VLEKLIKEFQ (190 aa).

The protein belongs to the biotin--protein ligase family. In terms of assembly, monomer. Widely expressed. Mostly expressed in muscle, placenta and to a lower extent in the brain, kidney, pancreas, liver and lung.

It is found in the cytoplasm. The protein localises to the mitochondrion. It carries out the reaction apo-[methylmalonyl-CoA:pyruvate carboxytransferase] + biotin + ATP = holo-[methylmalonyl-CoA:pyruvate carboxytransferase] + AMP + diphosphate + H(+). The enzyme catalyses apo-[propionyl-CoA:carbon-dioxide ligase (ADP-forming)] + biotin + ATP = holo-[propionyl-CoA:carbon-dioxide ligase (ADP-forming)] + AMP + diphosphate + H(+). It catalyses the reaction apo-[3-methylcrotonoyl-CoA:carbon-dioxide ligase (ADP-forming)] + biotin + ATP = holo-[3-methylcrotonoyl-CoA:carbon-dioxide ligase (ADP-forming)] + AMP + diphosphate + H(+). The catalysed reaction is biotin + L-lysyl-[protein] + ATP = N(6)-biotinyl-L-lysyl-[protein] + AMP + diphosphate + H(+). Its function is as follows. Biotin--protein ligase catalyzing the biotinylation of the 4 biotin-dependent carboxylases acetyl-CoA-carboxylase, pyruvate carboxylase, propionyl-CoA carboxylase, and methylcrotonyl-CoA carboxylase. This Homo sapiens (Human) protein is Biotin--protein ligase.